Consider the following 1308-residue polypeptide: Cilia- and flagella-associated protein 57 C (1308 aa).

WD repeat units lie at residues N57–N99, Y110–G154, N415–S454, S504–Q546, G551–Q590, L645–T689, and H694–M733. A coiled-coil region spans residues L779–I1000.

It belongs to the CFAP57 family. As to quaternary structure, forms a heterodimer with CFAP57A. Associates with components of the nexin-dynein regulatory complex (N-DRC) and the CFAP184:CFAP263 complex.

The protein resides in the cell projection. It localises to the cilium. Associates with components of the nexin-dynein regulatory complex (N-DRC), a key regulator of ciliary/flagellar motility, and might act as an inner dynein arm (IDA) hub or linkage. This chain is Cilia- and flagella-associated protein 57 C (CFAP57C), found in Tetrahymena thermophila (strain SB210).